The following is a 468-amino-acid chain: Glutamate--tRNA ligase (468 aa).

An L-glutamate-binding site is contributed by 5–7 (RIA). The 'HIGH' region signature appears at 8-18 (PSPTGDPHVGT). H15 is a binding site for ATP. L-glutamate is bound by residues E41, 187–191 (YHLAN), and R205. Residues E208, L236, 243–247 (KISKR), and K246 each bind ATP. The 'KMSKS' region signature appears at 243–247 (KISKR). Residues 432 to 447 (QPLRAALTGSLETPGL) are interaction with tRNA.

It belongs to the class-I aminoacyl-tRNA synthetase family. Glutamate--tRNA ligase type 1 subfamily. Monomer.

Its subcellular location is the cytoplasm. The enzyme catalyses tRNA(Glu) + L-glutamate + ATP = L-glutamyl-tRNA(Glu) + AMP + diphosphate. In the absence of bound tRNA, ATP is bound in a non-productive mode, and the enzyme cannot activate amino acids. Functionally, catalyzes the attachment of glutamate to tRNA(Glu) in a two-step reaction: glutamate is first activated by ATP to form Glu-AMP and then transferred to the acceptor end of tRNA(Glu). This Thermus thermophilus (strain ATCC 27634 / DSM 579 / HB8) protein is Glutamate--tRNA ligase.